Here is a 281-residue protein sequence, read N- to C-terminus: NADPH-dependent 7-cyano-7-deazaguanine reductase (281 aa).

Residue 81 to 83 (IES) participates in substrate binding. 83–84 (SK) provides a ligand contact to NADPH. C188 acts as the Thioimide intermediate in catalysis. D195 acts as the Proton donor in catalysis. 227–228 (HE) is a binding site for substrate. An NADPH-binding site is contributed by 256-257 (RG).

This sequence belongs to the GTP cyclohydrolase I family. QueF type 2 subfamily. As to quaternary structure, homodimer.

The protein resides in the cytoplasm. It carries out the reaction 7-aminomethyl-7-carbaguanine + 2 NADP(+) = 7-cyano-7-deazaguanine + 2 NADPH + 3 H(+). It participates in tRNA modification; tRNA-queuosine biosynthesis. Its function is as follows. Catalyzes the NADPH-dependent reduction of 7-cyano-7-deazaguanine (preQ0) to 7-aminomethyl-7-deazaguanine (preQ1). In Paracidovorax citrulli (strain AAC00-1) (Acidovorax citrulli), this protein is NADPH-dependent 7-cyano-7-deazaguanine reductase.